A 398-amino-acid chain; its full sequence is MTTSAASGEPGRQRVLILGSTGSIGTQALEVIAANPDRFEVVGLAAGGGNPELLAAQRAQTGVAAVAVADPAAAEAVGDVRYSGPDAVTRLVEDTEADVVLNALVGALGLQPTLAALATGARLALANKESLVAGGPLVLKAAAPGQIVPVDSEHSAMAQCLRGGTRAELDKIVLTASGGPFLGWSAEDLKSVTPEQAGKHPTWSMGPMNTLNSATLVNKGLELIETHLLFGVDYDDIDVVVHPQSIVHSMATFTDGSTLAQASPPDMKLPIALALGWPDRIAGAAAACDFSTASTWEFLPLDNAVFPAVDLARFAGKQGGCLTAVYNSANEEAAEAFLDGRIGFPDIVETVGDVLHAADRWAAEPATVDDVLDAQRWAREQARGVVEQKSVRRGLVTK.

Residues Thr-21, Gly-22, Ser-23, Ile-24, Gly-47, Asn-50, and Asn-127 each contribute to the NADPH site. 1-deoxy-D-xylulose 5-phosphate is bound at residue Lys-128. Glu-129 lines the NADPH pocket. Asp-151 contributes to the Mn(2+) binding site. Residues Ser-152, Glu-153, Ser-177, and His-200 each coordinate 1-deoxy-D-xylulose 5-phosphate. Residue Glu-153 participates in Mn(2+) binding. An NADPH-binding site is contributed by Gly-206. Residues Ser-213, Asn-218, Lys-219, and Glu-222 each coordinate 1-deoxy-D-xylulose 5-phosphate. Glu-222 contacts Mn(2+).

It belongs to the DXR family. Mg(2+) is required as a cofactor. Mn(2+) serves as cofactor.

It carries out the reaction 2-C-methyl-D-erythritol 4-phosphate + NADP(+) = 1-deoxy-D-xylulose 5-phosphate + NADPH + H(+). The protein operates within isoprenoid biosynthesis; isopentenyl diphosphate biosynthesis via DXP pathway; isopentenyl diphosphate from 1-deoxy-D-xylulose 5-phosphate: step 1/6. Its function is as follows. Catalyzes the NADPH-dependent rearrangement and reduction of 1-deoxy-D-xylulose-5-phosphate (DXP) to 2-C-methyl-D-erythritol 4-phosphate (MEP). The sequence is that of 1-deoxy-D-xylulose 5-phosphate reductoisomerase from Mycolicibacterium smegmatis (strain ATCC 700084 / mc(2)155) (Mycobacterium smegmatis).